The chain runs to 157 residues: Large ribosomal subunit protein uL13m (157 aa).

Residues 1–29 (MSTLNGQTALAYAKVWHHVSAKNVPLGRL) constitute a mitochondrion transit peptide.

It belongs to the universal ribosomal protein uL13 family. In terms of assembly, component of the mitochondrial large ribosomal subunit (mt-LSU). Mature yeast 74S mitochondrial ribosomes consist of a small (37S) and a large (54S) subunit. The 37S small subunit contains a 15S ribosomal RNA (15S mt-rRNA) and at least 32 different proteins. The 54S large subunit contains a 21S rRNA (21S mt-rRNA) and at least 45 different proteins.

The protein resides in the mitochondrion. Component of the mitochondrial ribosome (mitoribosome), a dedicated translation machinery responsible for the synthesis of mitochondrial genome-encoded proteins, including at least some of the essential transmembrane subunits of the mitochondrial respiratory chain. The mitoribosomes are attached to the mitochondrial inner membrane and translation products are cotranslationally integrated into the membrane. The polypeptide is Large ribosomal subunit protein uL13m (Schizosaccharomyces pombe (strain 972 / ATCC 24843) (Fission yeast)).